The chain runs to 215 residues: Cytochrome b6 (215 aa).

Residues 32–52 (IFYCLGGITLTCFLVQVATGF) form a helical membrane-spanning segment. Heme c is bound at residue C35. The heme b site is built by H86 and H100. Helical transmembrane passes span 90–110 (ASMM…TGGF), 116–136 (LTWV…VTGY), and 186–206 (LHTF…FPMI). Heme b-binding residues include H187 and H202.

This sequence belongs to the cytochrome b family. PetB subfamily. As to quaternary structure, the 4 large subunits of the cytochrome b6-f complex are cytochrome b6, subunit IV (17 kDa polypeptide, PetD), cytochrome f and the Rieske protein, while the 4 small subunits are PetG, PetL, PetM and PetN. The complex functions as a dimer. The cofactor is heme b. Requires heme c as cofactor.

It localises to the plastid. The protein resides in the chloroplast thylakoid membrane. Functionally, component of the cytochrome b6-f complex, which mediates electron transfer between photosystem II (PSII) and photosystem I (PSI), cyclic electron flow around PSI, and state transitions. The protein is Cytochrome b6 of Helianthus annuus (Common sunflower).